The following is a 738-amino-acid chain: Catalase-peroxidase (738 aa).

Residues 1–16 are compositionally biased toward basic and acidic residues; it reads MSENHDAIVTDAKTEE. Residues 1 to 37 are disordered; it reads MSENHDAIVTDAKTEEAGGCPVAHGRAPHPTQGGGNR. Residues 108–231 constitute a cross-link (tryptophyl-tyrosyl-methioninium (Trp-Tyr) (with M-257)); that stretch reads WHSAGTYRIS…LGAVQMGLIY (124 aa). Histidine 109 (proton acceptor) is an active-site residue. A cross-link (tryptophyl-tyrosyl-methioninium (Tyr-Met) (with W-108)) is located at residues 231–257; the sequence is YVNPEGPNGNPDPIAAARDIRETFGRM. Histidine 272 serves as a coordination point for heme b.

This sequence belongs to the peroxidase family. Peroxidase/catalase subfamily. In terms of assembly, homodimer or homotetramer. Heme b serves as cofactor. Formation of the three residue Trp-Tyr-Met cross-link is important for the catalase, but not the peroxidase activity of the enzyme.

The enzyme catalyses H2O2 + AH2 = A + 2 H2O. It carries out the reaction 2 H2O2 = O2 + 2 H2O. In terms of biological role, bifunctional enzyme with both catalase and broad-spectrum peroxidase activity. The sequence is that of Catalase-peroxidase from Streptomyces ambofaciens.